The following is a 271-amino-acid chain: Mannosyl-3-phosphoglycerate phosphatase (271 aa).

Asp13 functions as the Nucleophile in the catalytic mechanism. Residues Asp13, Asp15, and Asp214 each contribute to the Mg(2+) site.

It belongs to the HAD-like hydrolase superfamily. MPGP family. Mg(2+) serves as cofactor.

The protein resides in the cytoplasm. The enzyme catalyses 2-O-(alpha-D-mannosyl)-3-phosphoglycerate + H2O = (2R)-2-O-(alpha-D-mannosyl)-glycerate + phosphate. This is Mannosyl-3-phosphoglycerate phosphatase from Escherichia coli (strain 55989 / EAEC).